Here is a 432-residue protein sequence, read N- to C-terminus: Probable exopolygalacturonase C (432 aa).

Residues 1 to 20 (MPISKGIFLSLLSTLPLALA) form the signal peptide. 4 N-linked (GlcNAc...) asparagine glycosylation sites follow: N33, N73, N90, and N140. PbH1 repeat units follow at residues 206 to 227 (GTNI…AVGS) and 229 to 250 (SHDI…SIGS). Residue D220 is the Proton donor of the active site. The active site involves H244. A glycan (N-linked (GlcNAc...) asparagine) is linked at N260. The stretch at 261-282 (ITNLRFEDVTVIDALYAARFKS) is one PbH1 3 repeat. Residues N292 and N302 are each glycosylated (N-linked (GlcNAc...) asparagine). A disulfide bridge connects residues C377 and C383. N407 carries an N-linked (GlcNAc...) asparagine glycan.

This sequence belongs to the glycosyl hydrolase 28 family.

Its subcellular location is the secreted. It catalyses the reaction [(1-&gt;4)-alpha-D-galacturonosyl](n) + H2O = alpha-D-galacturonate + [(1-&gt;4)-alpha-D-galacturonosyl](n-1). Specific in hydrolyzing the terminal glycosidic bond of polygalacturonic acid and oligogalacturonates. This is Probable exopolygalacturonase C (pgxC) from Aspergillus terreus (strain NIH 2624 / FGSC A1156).